Reading from the N-terminus, the 340-residue chain is Lipopolysaccharide core biosynthesis glycosyltransferase LpsE (340 aa).

It belongs to the glycosyltransferase group 1 family. Glycosyltransferase 4 subfamily.

Its pathway is bacterial outer membrane biogenesis; LPS core biosynthesis. The protein is Lipopolysaccharide core biosynthesis glycosyltransferase LpsE (lpsE) of Rhizobium meliloti (strain 1021) (Ensifer meliloti).